The primary structure comprises 341 residues: Cyclic GMP-AMP synthase (341 aa).

Residue Ser-56 coordinates ATP. Catalysis depends on residues Asp-71 and Asp-73. Asp-73 is a Mg(2+) binding site. Asn-109 contributes to the ATP binding site. Residue Asp-123 is part of the active site. Asp-123 is a Mg(2+) binding site. Leu-192 and Asp-238 together coordinate ATP.

This sequence belongs to the CD-NTase family. B04 subfamily. In terms of assembly, monomer. Mg(2+) is required as a cofactor.

It catalyses the reaction GTP + ATP = 3',3'-cGAMP + 2 diphosphate. Its function is as follows. Cyclic nucleotide synthase (second messenger synthase) of a CBASS antivirus system. CBASS (cyclic oligonucleotide-based antiphage signaling system) provides immunity against bacteriophage. The CD-NTase protein synthesizes cyclic nucleotides in response to infection; these serve as specific second messenger signals. The signals activate a diverse range of effectors, leading to bacterial cell death and thus abortive phage infection. A type II-A(GA) CBASS system. Functionally, catalyzes the synthesis of 3'3'-cyclic GMP-AMP (3'3'-cGAMP) from GTP and ATP, a second messenger in cell signal transduction. May make another product. Controls the activity of the CBASS cGAMP-activated phospholipase effector protein. The polypeptide is Cyclic GMP-AMP synthase (Bacteroides fragilis).